We begin with the raw amino-acid sequence, 396 residues long: Dihydrolipoyllysine-residue acetyltransferase component of pyruvate dehydrogenase complex (396 aa).

The region spanning 1-69 (MPDIGLEEVE…KTDALIMRCE (69 aa)) is the Lipoyl-binding domain. The residue at position 35 (Lys-35) is an N6-lipoyllysine. The Peripheral subunit-binding (PSBD) domain maps to 104–141 (HATPLIRRLARNLNINLYDVVGTGPKNRILKEDLDLYQ). Residue His-369 is part of the active site.

Belongs to the 2-oxoacid dehydrogenase family. As to quaternary structure, forms a 24-polypeptide structural core with octahedral symmetry. The cofactor is (R)-lipoate.

The catalysed reaction is N(6)-[(R)-dihydrolipoyl]-L-lysyl-[protein] + acetyl-CoA = N(6)-[(R)-S(8)-acetyldihydrolipoyl]-L-lysyl-[protein] + CoA. Its function is as follows. The pyruvate dehydrogenase complex catalyzes the overall conversion of pyruvate to acetyl-CoA and CO(2). It contains multiple copies of three enzymatic components: pyruvate dehydrogenase (E1), dihydrolipoamide acetyltransferase (E2) and lipoamide dehydrogenase (E3). In Buchnera aphidicola subsp. Acyrthosiphon pisum (strain APS) (Acyrthosiphon pisum symbiotic bacterium), this protein is Dihydrolipoyllysine-residue acetyltransferase component of pyruvate dehydrogenase complex (aceF).